The chain runs to 350 residues: Derriere protein (350 aa).

Residues 1–16 (MLSLACFFSFLLMVKS) form the signal peptide. Positions 17–236 (SPLTFQERML…SSCKTPRAKR (220 aa)) are excised as a propeptide. N-linked (GlcNAc...) asparagine glycosylation is found at N171 and N202. 3 disulfide bridges follow: C249-C315, C278-C347, and C282-C349.

It belongs to the TGF-beta family. In terms of assembly, homodimer; disulfide-linked. Also forms heterodimers with other TGF-beta family members including nodal2/nr-2 and bmp4.

It is found in the secreted. Its function is as follows. Required for posterior mesoderm formation during embryogenesis. Acts indirectly to suppress head formation by altering mesodermal patterning. Also involved in the establishment of left-right axis asymmetry, acting upstream of nodal/nr-1. Can exert long-range effects in the embryo. This chain is Derriere protein, found in Xenopus tropicalis (Western clawed frog).